Here is a 559-residue protein sequence, read N- to C-terminus: Coiled-coil domain-containing protein 63 (559 aa).

Coiled coils occupy residues 14 to 70 (ELSE…QAET), 185 to 261 (EKAA…KLKS), and 364 to 414 (QQQS…VEKL).

Functionally, plays a role in spermiogenesis. Involved in the elongation of flagella and the formation of sperm heads. This Rattus norvegicus (Rat) protein is Coiled-coil domain-containing protein 63.